Consider the following 131-residue polypeptide: Aspartate 1-decarboxylase (131 aa).

Ser25 acts as the Schiff-base intermediate with substrate; via pyruvic acid in catalysis. Position 25 is a pyruvic acid (Ser) (Ser25). Thr57 is a binding site for substrate. Tyr58 acts as the Proton donor in catalysis. Position 73–75 (Gly73–Ala75) interacts with substrate.

It belongs to the PanD family. Heterooctamer of four alpha and four beta subunits. The cofactor is pyruvate. Is synthesized initially as an inactive proenzyme, which is activated by self-cleavage at a specific serine bond to produce a beta-subunit with a hydroxyl group at its C-terminus and an alpha-subunit with a pyruvoyl group at its N-terminus.

It is found in the cytoplasm. It carries out the reaction L-aspartate + H(+) = beta-alanine + CO2. The protein operates within cofactor biosynthesis; (R)-pantothenate biosynthesis; beta-alanine from L-aspartate: step 1/1. Its function is as follows. Catalyzes the pyruvoyl-dependent decarboxylation of aspartate to produce beta-alanine. This chain is Aspartate 1-decarboxylase, found in Anaeromyxobacter sp. (strain Fw109-5).